The following is a 416-amino-acid chain: GTPase Obg (416 aa).

The Obg domain occupies 1 to 157 (MFQDVLVITV…RRLRLELMLI (157 aa)). 2 disordered regions span residues 25–44 (EKFV…GGSV) and 62–82 (TYKA…RGGE). Positions 32 to 42 (GPDGGDGGRGG) are enriched in gly residues. The segment covering 63–72 (YKAEDGEHGR) has biased composition (basic and acidic residues). Residues 158-324 (ADVGLVGYPN…LKEALHALVR (167 aa)) enclose the OBG-type G domain. Residues 164-171 (GYPNAGKS), 189-193 (FTTLS), 211-214 (DIPG), 277-280 (NKVD), and 305-307 (SAL) contribute to the GTP site. Residues S171 and T191 each coordinate Mg(2+). Positions 336–414 (PRKEVQAGVE…IGGLEFEYIP (79 aa)) constitute an OCT domain.

The protein belongs to the TRAFAC class OBG-HflX-like GTPase superfamily. OBG GTPase family. Monomer. The cofactor is Mg(2+).

Its subcellular location is the cytoplasm. An essential GTPase which binds GTP, GDP and possibly (p)ppGpp with moderate affinity, with high nucleotide exchange rates and a fairly low GTP hydrolysis rate. Plays a role in control of the cell cycle, stress response, ribosome biogenesis and in those bacteria that undergo differentiation, in morphogenesis control. This is GTPase Obg from Thermus thermophilus (strain ATCC 27634 / DSM 579 / HB8).